The following is a 599-amino-acid chain: MNNDINSSVESLNSACNMQSDTDTVPLLENGQSASNQPSASSSRGQPQASPRQKMQRSQPVHIQPLRRLQEEDQQLRTSSLPAIPNPFPELAGGAPGSPPSVAPSSLPPPPSQPPAKHFPPGFQLAKLTRPGLWTKTTARFSKRQPKNQCQTDTANAVSRIPTSQMEKLRLRKDVKVFSEDGTSKVVEILTDMTARDLCQLLVYKSHCVDDNSWTLVEHHPQLGLERCLEDHEIVVQVESTMPSESKFLFRKNYAKYEFFKNPVNFFPDQMVTWCQQSNGGQAQLLQNFLNSSSCPEIQGFLQVKEVGRKSWKKLYVCLRRSGLYYSTKGTSKEPRHLQLLADLEESSIFYLIAGKKQYNAPNEHGMCIKPNKAKIEMKELRLLCAEDEQIRTCWMTAFRLLKYGMLLYQNYRIPQQRKGLAPPFNAPMRSVSENSLVAMDFSGQIGRVIDNPAEAQSAALEEGHAWRKRSTRMNILSSQSPLHPSTLNSVIHRTQHWFHGRISREESHRIIKQQGLVDGLFLLRDSQSNPKAFVLTLCHQQKIRNFQILPCEDDGQTFFTLDDGNTKFSDLIQLVDFYQLNKGVLPCKLKHHCIRVAL.

The span at 1–23 (MNNDINSSVESLNSACNMQSDTD) shows a compositional bias: polar residues. The interval 1 to 122 (MNNDINSSVE…QPPAKHFPPG (122 aa)) is disordered. The span at 32–43 (QSASNQPSASSS) shows a compositional bias: low complexity. Polar residues predominate over residues 44–61 (RGQPQASPRQKMQRSQPV). The residue at position 50 (S50) is a Phosphoserine. A compositionally biased stretch (pro residues) spans 97–118 (GSPPSVAPSSLPPPPSQPPAKH). Position 98 is a phosphoserine; by MTOR, MAPK1 and MAPK3 (S98). A Ras-associating domain is found at 171-255 (LRKDVKVFSE…SKFLFRKNYA (85 aa)). Residues 295–404 (CPEIQGFLQV…WMTAFRLLKY (110 aa)) form the PH domain. S433 bears the Phosphoserine; by MTOR and PKB/AKT1 mark. The residue at position 436 (S436) is a Phosphoserine. S481 bears the Phosphoserine; by MTOR, MAPK1 and MAPK3 mark. One can recognise an SH2 domain in the interval 498–594 (WFHGRISREE…VLPCKLKHHC (97 aa)).

This sequence belongs to the GRB7/10/14 family. Interacts with ligand-activated tyrosine kinase receptors, including FGFR1, INSR, IGF1R, MET and PDGFRB in a phosphotyrosine-dependent manner through the SH2 domain. Poorly binds to the EGFR. Directly interacts with MAP3K14/NIK and is recruited to the EGFR-ERBB2 complex. Interacts with GIGYF1/PERQ1 and GIGYF2/TNRC15. When unphosphorylated, interacts with AKT1 and when phosphorylated with YWHAE/14-3-3 epsilon. Interacts with NEDD4. Interacts with LRP6, thus interfering with the binding of AXIN1 to LRP6. Binds relatively non-specifically to several phosphoinositides, including PI(5)P, PI(4,5)P2, PI(3,4)P2 and PI(3,4,5)P3, with modest affinities through the PH domain. Binds to activated NRAS. Post-translationally, phosphorylated on serine residues upon EGF, FGF and PDGF stimulation.

It is found in the cytoplasm. Phosphorylation by mTORC1 stabilizes and activates GRB10 constituting a feedback pathway by which mTORC1 inhibits INSR-dependent signaling. In terms of biological role, adapter protein which modulates coupling of a number of cell surface receptor kinases with specific signaling pathways. Binds to, and suppress signals from, activated receptors tyrosine kinases, including the insulin (INSR) and insulin-like growth factor (IGF1R) receptors. The inhibitory effect can be achieved by 2 mechanisms: interference with the signaling pathway and increased receptor degradation. Delays and reduces AKT1 phosphorylation in response to insulin stimulation. Blocks association between INSR and IRS1 and IRS2 and prevents insulin-stimulated IRS1 and IRS2 tyrosine phosphorylation. Recruits NEDD4 to IGF1R, leading to IGF1R ubiquitination, increased internalization and degradation by both the proteasomal and lysosomal pathways. A similar role in the mediation of ubiquitination also has been suggested with INSR. Negatively regulates Wnt signaling by interacting with LRP6 intracellular portion and interfering with the binding of AXIN1 to LRP6. Positive regulator of the KDR/VEGFR-2 signaling pathway. May inhibit NEDD4-mediated degradation of KDR/VEGFR-2. This is Growth factor receptor-bound protein 10 (Grb10) from Rattus norvegicus (Rat).